A 94-amino-acid chain; its full sequence is MFGRLGAPEIILILVVIILLFGAKKLPDMARSLGKSARILKSEAKAMKSEGQESTPAGPPNTDEQPPAQRTIQAAPGDVTSSRPVSEPTDTTKR.

The helical transmembrane segment at 1–21 threads the bilayer; it reads MFGRLGAPEIILILVVIILLF. The tract at residues 44-94 is disordered; that stretch reads AKAMKSEGQESTPAGPPNTDEQPPAQRTIQAAPGDVTSSRPVSEPTDTTKR. A compositionally biased stretch (polar residues) spans 62–72; it reads TDEQPPAQRTI.

This sequence belongs to the TatA/E family. As to quaternary structure, the Tat system comprises two distinct complexes: a TatABC complex, containing multiple copies of TatA, TatB and TatC subunits, and a separate TatA complex, containing only TatA subunits. Substrates initially bind to the TatABC complex, which probably triggers association of the separate TatA complex to form the active translocon.

It is found in the cell membrane. Functionally, part of the twin-arginine translocation (Tat) system that transports large folded proteins containing a characteristic twin-arginine motif in their signal peptide across membranes. TatA could form the protein-conducting channel of the Tat system. In Streptomyces avermitilis (strain ATCC 31267 / DSM 46492 / JCM 5070 / NBRC 14893 / NCIMB 12804 / NRRL 8165 / MA-4680), this protein is Sec-independent protein translocase protein TatA.